The sequence spans 311 residues: Aspartate carbamoyltransferase catalytic subunit (311 aa).

Residues Arg58 and Thr59 each contribute to the carbamoyl phosphate site. L-aspartate is bound at residue Lys86. Carbamoyl phosphate is bound by residues Arg108, His136, and Gln139. The L-aspartate site is built by Arg169 and Arg223. Residues Gly264 and Pro265 each coordinate carbamoyl phosphate.

It belongs to the aspartate/ornithine carbamoyltransferase superfamily. ATCase family. In terms of assembly, heterododecamer (2C3:3R2) of six catalytic PyrB chains organized as two trimers (C3), and six regulatory PyrI chains organized as three dimers (R2).

The enzyme catalyses carbamoyl phosphate + L-aspartate = N-carbamoyl-L-aspartate + phosphate + H(+). It functions in the pathway pyrimidine metabolism; UMP biosynthesis via de novo pathway; (S)-dihydroorotate from bicarbonate: step 2/3. In terms of biological role, catalyzes the condensation of carbamoyl phosphate and aspartate to form carbamoyl aspartate and inorganic phosphate, the committed step in the de novo pyrimidine nucleotide biosynthesis pathway. This chain is Aspartate carbamoyltransferase catalytic subunit, found in Desulfosudis oleivorans (strain DSM 6200 / JCM 39069 / Hxd3) (Desulfococcus oleovorans).